The following is a 567-amino-acid chain: Dynein, 70 kDa intermediate chain, flagellar outer arm (567 aa).

4 WD repeats span residues 214-254 (VPTS…GPVE), 261-302 (SHRD…ECVE), 360-399 (GHHG…KTPI), and 404-444 (YHPT…NEPT).

The protein belongs to the dynein intermediate chain family. Consists of at least 3 heavy chains (alpha, beta and gamma), 2 intermediate chains and 8 light chains.

The protein resides in the cytoplasm. Its subcellular location is the cytoskeleton. It is found in the flagellum axoneme. In terms of biological role, may play a role in regulating dynein heavy chain (DHC) activity. May function in holding IC78 to the DHC, or in stabilizing the entire dynein complex. This Chlamydomonas reinhardtii (Chlamydomonas smithii) protein is Dynein, 70 kDa intermediate chain, flagellar outer arm (ODA6).